We begin with the raw amino-acid sequence, 421 residues long: MNIVNLISKKQRGKALTETEINWFVHSVNNKSLADYQVSAFLMAVWFQGMNSKELFCLTKAMVKSGESLHFNHHSKLSVDKHSTGGIGDKVSIALIPILTALDYSVAKLSGRGLGYTGGTIDKLEAVGVKTDFTPTEAQNLLDQNDCFIIGQSEGIAPVDKVLYALRDTTATVDSLPLIASSVMSKKLAINNDYIFIDLKYGKGAFCKTKTMAKELAQYMYSIAKQFKRKLYIKLSDMNQVLGKTIGNALEVLEVVHFLKRNWTEVGADFIQLMEQIVTEILIETKRAPNKRAAVALYHATLEGEKPWQRFLKFIELQGSSWERFLDLKELFNPQYKAPVLASQSGTLSYTSPVDLAMVSISLGAGRMVKTDLIDPMAGIKLVKQANEVVKAGDTVLELYSSKPITPAHIEAAQHTIIIKQ.

It belongs to the thymidine/pyrimidine-nucleoside phosphorylase family. Homodimer.

The catalysed reaction is thymidine + phosphate = 2-deoxy-alpha-D-ribose 1-phosphate + thymine. Its function is as follows. The enzymes which catalyze the reversible phosphorolysis of pyrimidine nucleosides are involved in the degradation of these compounds and in their utilization as carbon and energy sources, or in the rescue of pyrimidine bases for nucleotide synthesis. This chain is Thymidine phosphorylase (deoA), found in Mycoplasma pneumoniae (strain ATCC 29342 / M129 / Subtype 1) (Mycoplasmoides pneumoniae).